The primary structure comprises 56 residues: Large ribosomal subunit protein bL33 (56 aa).

This sequence belongs to the bacterial ribosomal protein bL33 family.

The polypeptide is Large ribosomal subunit protein bL33 (Rickettsia africae (strain ESF-5)).